Here is a 190-residue protein sequence, read N- to C-terminus: ATP synthase subunit delta (190 aa).

The protein belongs to the ATPase delta chain family. F-type ATPases have 2 components, F(1) - the catalytic core - and F(0) - the membrane proton channel. F(1) has five subunits: alpha(3), beta(3), gamma(1), delta(1), epsilon(1). F(0) has three main subunits: a(1), b(2) and c(10-14). The alpha and beta chains form an alternating ring which encloses part of the gamma chain. F(1) is attached to F(0) by a central stalk formed by the gamma and epsilon chains, while a peripheral stalk is formed by the delta and b chains.

The protein resides in the cell inner membrane. Its function is as follows. F(1)F(0) ATP synthase produces ATP from ADP in the presence of a proton or sodium gradient. F-type ATPases consist of two structural domains, F(1) containing the extramembraneous catalytic core and F(0) containing the membrane proton channel, linked together by a central stalk and a peripheral stalk. During catalysis, ATP synthesis in the catalytic domain of F(1) is coupled via a rotary mechanism of the central stalk subunits to proton translocation. In terms of biological role, this protein is part of the stalk that links CF(0) to CF(1). It either transmits conformational changes from CF(0) to CF(1) or is implicated in proton conduction. The sequence is that of ATP synthase subunit delta from Methylobacterium radiotolerans (strain ATCC 27329 / DSM 1819 / JCM 2831 / NBRC 15690 / NCIMB 10815 / 0-1).